Here is a 478-residue protein sequence, read N- to C-terminus: Centromere DNA-binding protein complex CBF3 subunit C (478 aa).

The interval 206 to 251 is disordered; that stretch reads EVGEEKDVDVSGANSDENSSPSSTIKNKKRSASKRSHSDNGNVGAT. Residues 217 to 230 show a composition bias toward polar residues; the sequence is GANSDENSSPSSTI. The segment covering 231 to 240 has biased composition (basic residues); it reads KNKKRSASKR.

In terms of assembly, component of the CBF3 copmplex, which is formed of CBF3A/CBF2, CBF3B/CEP3, CBF3C/CTF13 and CBF3D. CBF3C interacts with CBF3D and SGT1.

It is found in the nucleus. The protein resides in the chromosome. Its subcellular location is the centromere. Acts as a central component of the centromere DNA-binding protein complex CBF3, which is essential for chromosome segregation and movement of centromeres along microtubules. CBF3 is required for the recruitment of other kinetochore complexes to CEN DNA. It plays a role in the attachment of chromosomes to the spindle and binds selectively to a highly conserved DNA sequence called CDEIII, found in centromers and in several promoters. The association of CBF3C with CBF3D and SGT1 is required for CBF3C activation and CBF3 assembly. This Saccharomyces cerevisiae (strain ATCC 204508 / S288c) (Baker's yeast) protein is Centromere DNA-binding protein complex CBF3 subunit C (CTF13).